Consider the following 457-residue polypeptide: Transcription factor PCF7 (457 aa).

A coiled-coil region spans residues 58–84; that stretch reads STLHYLLQEKERAQQAHEQLQIYQQQQ. The disordered stretch occupies residues 95 to 121; that stretch reads RQPASRGPGGGGGGGDGGGSSGESTPV. The segment covering 101–115 has biased composition (gly residues); that stretch reads GPGGGGGGGDGGGSS. The region spanning 140–198 is the TCP domain; the sequence is RKDRHSKVCTARGLRDRRVRLAAHTAIRFYDVQDRLGYDRPSKAVDWLMRNAKAAIDEL. Disordered regions lie at residues 199-231 and 263-299; these read PDRAEAPPPPAAASTEQPEGTEQANSTSYGFGN and KSLFPSSSTASGAASAGHDEYRGSPPDLLSRTTSNQQ. The segment covering 212–230 has biased composition (polar residues); sequence STEQPEGTEQANSTSYGFG. The segment covering 268-278 has biased composition (low complexity); sequence SSSTASGAASA.

In terms of assembly, forms homodimers and heterodimers.

It is found in the nucleus. Its function is as follows. Transcription activator. Binds the promoter core sequence 5'-GGNCC-3'. This Oryza sativa subsp. indica (Rice) protein is Transcription factor PCF7 (PCF7).